The chain runs to 272 residues: uncharacterized protein (272 aa).

The next 6 membrane-spanning stretches (helical) occupy residues 20-37 (VYLSVFIVLALYCVNLLI), 57-77 (HPLTYTIIPTYLVVLTAHFSL), 97-119 (LNVSCIAIVTTGYSVLIAFIMLM), 155-177 (SIATLLLLWLLLFLLGLLFYVIF), 184-203 (LVSLLFVFLLNIMNAAVTLG), and 234-256 (PYSIFVYWIMLIAVIYLIGWLVI).

Its subcellular location is the cell membrane. This is an uncharacterized protein from Halalkalibacterium halodurans (strain ATCC BAA-125 / DSM 18197 / FERM 7344 / JCM 9153 / C-125) (Bacillus halodurans).